Reading from the N-terminus, the 54-residue chain is Small ribosomal subunit protein uS14 (54 aa).

Residues cysteine 19, cysteine 22, cysteine 37, and cysteine 40 each coordinate Zn(2+).

It belongs to the universal ribosomal protein uS14 family. Zinc-binding uS14 subfamily. In terms of assembly, part of the 30S ribosomal subunit. The cofactor is Zn(2+).

Functionally, binds 16S rRNA, required for the assembly of 30S particles. This is Small ribosomal subunit protein uS14 from Pyrobaculum aerophilum (strain ATCC 51768 / DSM 7523 / JCM 9630 / CIP 104966 / NBRC 100827 / IM2).